Reading from the N-terminus, the 194-residue chain is Xanthine phosphoribosyltransferase (194 aa).

Positions 20 and 27 each coordinate xanthine. 128–132 (ANGEA) contacts 5-phospho-alpha-D-ribose 1-diphosphate. Lys-156 serves as a coordination point for xanthine.

The protein belongs to the purine/pyrimidine phosphoribosyltransferase family. Xpt subfamily. In terms of assembly, homodimer.

Its subcellular location is the cytoplasm. It carries out the reaction XMP + diphosphate = xanthine + 5-phospho-alpha-D-ribose 1-diphosphate. It functions in the pathway purine metabolism; XMP biosynthesis via salvage pathway; XMP from xanthine: step 1/1. Its function is as follows. Converts the preformed base xanthine, a product of nucleic acid breakdown, to xanthosine 5'-monophosphate (XMP), so it can be reused for RNA or DNA synthesis. In Macrococcus caseolyticus (strain JCSC5402) (Macrococcoides caseolyticum), this protein is Xanthine phosphoribosyltransferase.